Here is a 976-residue protein sequence, read N- to C-terminus: Ephrin type-A receptor 2 (976 aa).

The signal sequence occupies residues 1-23 (MELWAARACFVLLWGCALAPATA). The mediates interaction with CLDN4 stretch occupies residues 1-206 (MELWAARACF…YYKKCPELLQ (206 aa)). At 25–537 (QGKEVVLLDF…SPEGSGSLAV (513 aa)) the chain is on the extracellular side. The region spanning 28 to 206 (EVVLLDFAAA…YYKKCPELLQ (179 aa)) is the Eph LBD domain. Disulfide bonds link Cys70–Cys188 and Cys105–Cys115. One can recognise a Fibronectin type-III 1 domain in the interval 328-432 (PPSAPHYLTA…TSRSFRTASV (105 aa)). Residues Asn407 and Asn435 are each glycosylated (N-linked (GlcNAc...) asparagine). Residues 438–529 (EPPKVRLEGR…KVHEFQTLSP (92 aa)) enclose the Fibronectin type-III 2 domain. The chain crosses the membrane as a helical span at residues 538-558 (IGGVAVCVVLLLLLAGAGFFI). At 559–976 (HRRRKNLRAR…DQVNTVGIPI (418 aa)) the chain is on the cytoplasmic side. Ser570 carries the phosphoserine modification. Position 575 is a phosphotyrosine (Tyr575). Residue Ser579 is modified to Phosphoserine. Residue Tyr588 is modified to Phosphotyrosine; by autocatalysis. Tyr594 carries the phosphotyrosine modification. The segment at 606-906 (TEIHPSCVTR…STSGSEGVPF (301 aa)) is mediates interaction with ARHGEF16. The Protein kinase domain occupies 613–875 (VTRQKVIGAG…DIVSILDKLI (263 aa)). Residue 619-627 (IGAGEFGEV) participates in ATP binding. Tyr628 carries the post-translational modification Phosphotyrosine. Residue Lys646 coordinates ATP. At Thr647 the chain carries Phosphothreonine. A Phosphotyrosine; by autocatalysis modification is found at Tyr735. The active-site Proton acceptor is Asp739. Phosphotyrosine is present on Tyr772. Phosphoserine is present on residues Ser869, Ser892, Ser897, and Ser901. Residues 886-976 (DFDPRVSIRL…DQVNTVGIPI (91 aa)) form a negatively regulates interaction with ARHGEF16 region. The SAM domain maps to 904–968 (VPFRTVSEWL…AYSLLGLKDQ (65 aa)). Position 921 is a phosphotyrosine; by autocatalysis (Tyr921). A Phosphotyrosine modification is found at Tyr930. Residues 974 to 976 (IPI) carry the PDZ-binding motif.

It belongs to the protein kinase superfamily. Tyr protein kinase family. Ephrin receptor subfamily. As to quaternary structure, homodimer. Interacts with SLA. Interacts (phosphorylated form) with VAV2, VAV3 and PI3-kinase p85 subunit (PIK3R1, PIK3R2 or PIK3R3); critical for the EFNA1-induced activation of RAC1 which stimulates cell migration. Interacts with INPPL1; regulates activated EPHA2 endocytosis and degradation. Interacts (inactivated form) with PTK2/FAK1 and interacts (EFNA1 ligand-activated form) with PTPN11; regulates integrin-mediated adhesion. Interacts with ARHGEF16, DOCK4 and ELMO2; mediates ligand-independent activation of RAC1 which stimulates cell migration. Interacts with CLDN4; phosphorylates CLDN4 and may regulate tight junctions. Interacts with ACP1. Interacts with ANKS1A. Interacts with CEMIP. Interacts with NCK1; may regulate EPHA2 activity in cell migration and adhesion. Interacts with TIMD4. In terms of processing, autophosphorylates. Phosphorylated on tyrosine upon binding and activation by EFNA1. Phosphorylated residues Tyr-588 and Tyr-594 are required for binding VAV2 and VAV3 while phosphorylated residues Tyr-735 and Tyr-930 are required for binding PI3-kinase p85 subunit (PIK3R1, PIK3R2 or PIK3R3). These phosphorylated residues are critical for recruitment of VAV2 and VAV3 and PI3-kinase p85 subunit which transduce downstream signaling to activate RAC1 GTPase and cell migration. Dephosphorylation of Tyr-930 by PTPRF prevents the interaction of EPHA2 with NCK1. Phosphorylated at Ser-897 by PKB; serum-induced phosphorylation which targets EPHA2 to the cell leading edge and stimulates cell migration. Phosphorylation by PKB is inhibited by EFNA1-activated EPHA2 which regulates PKB activity via a reciprocal regulatory loop. Phosphorylated at Ser-897 in response to TNF by RPS6KA1 and RPS6KA3; RPS6KA-EPHA2 signaling pathway controls cell migration. Phosphorylated at Ser-897 by PKA; blocks cell retraction induced by EPHA2 kinase activity. Dephosphorylated by ACP1. Post-translationally, ubiquitinated by CHIP/STUB1. Ubiquitination is regulated by the HSP90 chaperone and regulates the receptor stability and activity through proteasomal degradation. ANKS1A prevents ubiquitination and degradation.

The protein localises to the cell membrane. It is found in the cell projection. The protein resides in the ruffle membrane. Its subcellular location is the lamellipodium membrane. It localises to the cell junction. The protein localises to the focal adhesion. It catalyses the reaction L-tyrosyl-[protein] + ATP = O-phospho-L-tyrosyl-[protein] + ADP + H(+). Receptor tyrosine kinase which binds promiscuously membrane-bound ephrin-A family ligands residing on adjacent cells, leading to contact-dependent bidirectional signaling into neighboring cells. The signaling pathway downstream of the receptor is referred to as forward signaling while the signaling pathway downstream of the ephrin ligand is referred to as reverse signaling. Activated by the ligand ephrin-A1/EFNA1 regulates migration, integrin-mediated adhesion, proliferation and differentiation of cells. Regulates cell adhesion and differentiation through DSG1/desmoglein-1 and inhibition of the ERK1/ERK2 signaling pathway. May also participate in UV radiation-induced apoptosis and have a ligand-independent stimulatory effect on chemotactic cell migration. During development, may function in distinctive aspects of pattern formation and subsequently in development of several fetal tissues. Involved for instance in angiogenesis, in early hindbrain development and epithelial proliferation and branching morphogenesis during mammary gland development. Engaged by the ligand ephrin-A5/EFNA5 may regulate lens fiber cells shape and interactions and be important for lens transparency development and maintenance. With ephrin-A2/EFNA2 may play a role in bone remodeling through regulation of osteoclastogenesis and osteoblastogenesis. This is Ephrin type-A receptor 2 (EPHA2) from Macaca fascicularis (Crab-eating macaque).